A 148-amino-acid chain; its full sequence is Large ribosomal subunit protein uL15 (148 aa).

The disordered stretch occupies residues 1–47; sequence MAFSLENLRPAPGSRPKSKRVGRGSSSGKGKTSSRGHKGQGRGTGKV.

Belongs to the universal ribosomal protein uL15 family. As to quaternary structure, part of the 50S ribosomal subunit.

Functionally, binds to the 23S rRNA. The sequence is that of Large ribosomal subunit protein uL15 from Kosmotoga olearia (strain ATCC BAA-1733 / DSM 21960 / TBF 19.5.1).